Here is a 150-residue protein sequence, read N- to C-terminus: UPF0336 protein SGR_2883 (150 aa).

Residues 10–116 form the MaoC-like domain; sequence RTYPPTPAYE…STIEAVKSLA (107 aa).

The protein belongs to the UPF0336 family.

The chain is UPF0336 protein SGR_2883 from Streptomyces griseus subsp. griseus (strain JCM 4626 / CBS 651.72 / NBRC 13350 / KCC S-0626 / ISP 5235).